The primary structure comprises 482 residues: PAN domain-containing protein At5g03700 (482 aa).

The N-terminal stretch at 1–31 (MEGLCLNSFTRVLLLLFVFLVFSHKWQRVNA) is a signal peptide. The region spanning 330–411 (CDKTTEFKVV…SKLGYFKVRE (82 aa)) is the PAN domain. 2 cysteine pairs are disulfide-bonded: C363/C385 and C367/C373. A helical transmembrane segment spans residues 425–445 (GMSLLAVIALVLMVAMVYVGF).

It localises to the membrane. The sequence is that of PAN domain-containing protein At5g03700 from Arabidopsis thaliana (Mouse-ear cress).